A 475-amino-acid chain; its full sequence is Ribulose bisphosphate carboxylase large chain (475 aa).

A propeptide spanning residues 1 to 2 (MS) is cleaved from the precursor. Pro-3 carries the post-translational modification N-acetylproline. Lys-14 is modified (N6,N6,N6-trimethyllysine). Asn-123 and Thr-173 together coordinate substrate. Residue Lys-175 is the Proton acceptor of the active site. Lys-177 provides a ligand contact to substrate. 3 residues coordinate Mg(2+): Lys-201, Asp-203, and Glu-204. N6-carboxylysine is present on Lys-201. Catalysis depends on His-294, which acts as the Proton acceptor. The substrate site is built by Arg-295, His-327, and Ser-379.

This sequence belongs to the RuBisCO large chain family. Type I subfamily. As to quaternary structure, heterohexadecamer of 8 large chains and 8 small chains; disulfide-linked. The disulfide link is formed within the large subunit homodimers. Mg(2+) serves as cofactor. Post-translationally, the disulfide bond which can form in the large chain dimeric partners within the hexadecamer appears to be associated with oxidative stress and protein turnover.

It localises to the plastid. The protein localises to the chloroplast. It catalyses the reaction 2 (2R)-3-phosphoglycerate + 2 H(+) = D-ribulose 1,5-bisphosphate + CO2 + H2O. The enzyme catalyses D-ribulose 1,5-bisphosphate + O2 = 2-phosphoglycolate + (2R)-3-phosphoglycerate + 2 H(+). RuBisCO catalyzes two reactions: the carboxylation of D-ribulose 1,5-bisphosphate, the primary event in carbon dioxide fixation, as well as the oxidative fragmentation of the pentose substrate in the photorespiration process. Both reactions occur simultaneously and in competition at the same active site. This is Ribulose bisphosphate carboxylase large chain from Picea abies (Norway spruce).